A 527-amino-acid polypeptide reads, in one-letter code: Bacillolysin (527 aa).

Positions 1–28 (MKKSYLATSLTLSIAVGVSGFTSVPAFA) are cleaved as a signal peptide. A propeptide spans 29–223 (KTKIDYHKQW…VINKYNMLDH (195 aa)) (activation peptide). Positions 276, 278, and 354 each coordinate Ca(2+). H358 is a Zn(2+) binding site. E359 is a catalytic residue. Zn(2+) contacts are provided by H362 and E382. Ca(2+) is bound by residues D393, N394, D396, E401, Y404, T405, and D411. H442 acts as the Proton donor in catalysis.

This sequence belongs to the peptidase M4 family. Requires Ca(2+) as cofactor. Zn(2+) serves as cofactor.

Its subcellular location is the secreted. The catalysed reaction is Similar, but not identical, to that of thermolysin.. Functionally, extracellular zinc metalloprotease. The sequence is that of Bacillolysin (npr) from Brevibacillus brevis (Bacillus brevis).